Consider the following 135-residue polypeptide: uncharacterized protein (135 aa).

This is an uncharacterized protein from Fowl adenovirus A serotype 1 (strain CELO / Phelps) (FAdV-1).